A 409-amino-acid chain; its full sequence is Arginine deiminase (409 aa).

The active-site Amidino-cysteine intermediate is the Cys399.

This sequence belongs to the arginine deiminase family.

It is found in the cytoplasm. The enzyme catalyses L-arginine + H2O = L-citrulline + NH4(+). Its pathway is amino-acid degradation; L-arginine degradation via ADI pathway; carbamoyl phosphate from L-arginine: step 1/2. This is Arginine deiminase from Borrelia garinii subsp. bavariensis (strain ATCC BAA-2496 / DSM 23469 / PBi) (Borreliella bavariensis).